A 774-amino-acid polypeptide reads, in one-letter code: DNA ligase (774 aa).

NAD(+) contacts are provided by residues 36–40, 85–86, and Glu-161; these read DAVYD and SL. Lys-163 serves as the catalytic N6-AMP-lysine intermediate. NAD(+)-binding residues include Arg-184, Glu-221, Lys-341, and Lys-365. Residues Cys-459, Cys-462, Cys-477, and Cys-482 each contribute to the Zn(2+) site. The BRCT domain maps to 693 to 774; it reads VQSGLLRGKT…LLEALAVTGI (82 aa).

Belongs to the NAD-dependent DNA ligase family. LigA subfamily. It depends on Mg(2+) as a cofactor. Requires Mn(2+) as cofactor.

It carries out the reaction NAD(+) + (deoxyribonucleotide)n-3'-hydroxyl + 5'-phospho-(deoxyribonucleotide)m = (deoxyribonucleotide)n+m + AMP + beta-nicotinamide D-nucleotide.. DNA ligase that catalyzes the formation of phosphodiester linkages between 5'-phosphoryl and 3'-hydroxyl groups in double-stranded DNA using NAD as a coenzyme and as the energy source for the reaction. It is essential for DNA replication and repair of damaged DNA. The polypeptide is DNA ligase (Trichodesmium erythraeum (strain IMS101)).